The following is a 348-amino-acid chain: Phosphate acyltransferase (348 aa).

Belongs to the PlsX family. In terms of assembly, homodimer. Probably interacts with PlsY.

Its subcellular location is the cytoplasm. It carries out the reaction a fatty acyl-[ACP] + phosphate = an acyl phosphate + holo-[ACP]. It participates in lipid metabolism; phospholipid metabolism. Functionally, catalyzes the reversible formation of acyl-phosphate (acyl-PO(4)) from acyl-[acyl-carrier-protein] (acyl-ACP). This enzyme utilizes acyl-ACP as fatty acyl donor, but not acyl-CoA. In Pectobacterium carotovorum subsp. carotovorum (strain PC1), this protein is Phosphate acyltransferase.